The following is a 159-amino-acid chain: NADH-quinone oxidoreductase subunit I (159 aa).

4Fe-4S ferredoxin-type domains are found at residues 51-80 and 90-119; these read RRYE…IEAD and TRYD…EGPN. The [4Fe-4S] cluster site is built by cysteine 60, cysteine 63, cysteine 66, cysteine 70, cysteine 99, cysteine 102, cysteine 105, and cysteine 109.

The protein belongs to the complex I 23 kDa subunit family. In terms of assembly, NDH-1 is composed of 14 different subunits. Subunits NuoA, H, J, K, L, M, N constitute the membrane sector of the complex. [4Fe-4S] cluster is required as a cofactor.

It localises to the cell inner membrane. It carries out the reaction a quinone + NADH + 5 H(+)(in) = a quinol + NAD(+) + 4 H(+)(out). In terms of biological role, NDH-1 shuttles electrons from NADH, via FMN and iron-sulfur (Fe-S) centers, to quinones in the respiratory chain. The immediate electron acceptor for the enzyme in this species is believed to be ubiquinone. Couples the redox reaction to proton translocation (for every two electrons transferred, four hydrogen ions are translocated across the cytoplasmic membrane), and thus conserves the redox energy in a proton gradient. The protein is NADH-quinone oxidoreductase subunit I of Rickettsia bellii (strain OSU 85-389).